The following is a 379-amino-acid chain: Odorant receptor 23a (379 aa).

Residues 1–36 (MKLSETLKIDYFRVQLNAWRICGALDLSEGRYWSWS) are Cytoplasmic-facing. A helical transmembrane segment spans residues 37–57 (MLLCILVYLPTPMLLRGVYSF). Over 58–64 (EDPVENN) the chain is Extracellular. Asparagine 64 carries N-linked (GlcNAc...) asparagine glycosylation. The chain crosses the membrane as a helical span at residues 65 to 85 (FSLSLTVTSLSNLMKFCMYVA). The Cytoplasmic portion of the chain corresponds to 86–125 (QLTKMVEVQSLIGQLDARVSGESQSERHRNMTEHLLRMSK). Residues 126–146 (LFQITYAVVFIIAAVPFVFET) traverse the membrane as a helical segment. Over 147-162 (ELSLPMPMWFPFDWKN) the chain is Extracellular. The helical transmembrane segment at 163–183 (SMVAYIGALVFQEIGYVFQIM) threads the bilayer. The Cytoplasmic segment spans residues 184–253 (QCFAADSFPP…TKSLVSYPMM (70 aa)). The chain crosses the membrane as a helical span at residues 254–274 (VQFMVIGINIAITLFVLIFYV). The Extracellular segment spans residues 275–280 (ETLYDR). A helical membrane pass occupies residues 281-301 (IYYLCFLLGITVQTYPLCYYG). At 302–340 (TMVQESFAELHYAVFCSNWVDQSASYRGHMLILAERTKR) the chain is on the cytoplasmic side. Residues 341–361 (MQLLLAGNLVPIHLSTYVACW) form a helical membrane-spanning segment. Over 362-379 (KGAYSFFTLMADRDGLGS) the chain is Extracellular.

Belongs to the insect chemoreceptor superfamily. Heteromeric odorant receptor channel (TC 1.A.69) family. Or2a subfamily. Interacts with Orco. Complexes exist early in the endomembrane system in olfactory sensory neurons (OSNs), coupling these complexes to the conserved ciliary trafficking pathway. As to expression, expressed in 10-40 sensory cells in the third antenna segment and in the maxillary palp.

Its subcellular location is the cell membrane. Odorant receptor which mediates acceptance or avoidance behavior, depending on its substrates. The odorant receptor repertoire encodes a large collection of odor stimuli that vary widely in identity, intensity, and duration. May form a complex with Orco to form odorant-sensing units, providing sensitive and prolonged odorant signaling and calcium permeability. This Drosophila melanogaster (Fruit fly) protein is Odorant receptor 23a (Or23a).